The chain runs to 243 residues: UDP-2,3-diacylglucosamine hydrolase (243 aa).

Residues Asp9, His11, Asp42, Asn79, and His114 each coordinate Mn(2+). 79–80 (NR) contributes to the substrate binding site. Substrate contacts are provided by Asp122, Ser160, Asn164, and His195. Positions 195 and 197 each coordinate Mn(2+).

Belongs to the LpxH family. Mn(2+) is required as a cofactor.

The protein localises to the cell inner membrane. It catalyses the reaction UDP-2-N,3-O-bis[(3R)-3-hydroxytetradecanoyl]-alpha-D-glucosamine + H2O = 2-N,3-O-bis[(3R)-3-hydroxytetradecanoyl]-alpha-D-glucosaminyl 1-phosphate + UMP + 2 H(+). It participates in glycolipid biosynthesis; lipid IV(A) biosynthesis; lipid IV(A) from (3R)-3-hydroxytetradecanoyl-[acyl-carrier-protein] and UDP-N-acetyl-alpha-D-glucosamine: step 4/6. Hydrolyzes the pyrophosphate bond of UDP-2,3-diacylglucosamine to yield 2,3-diacylglucosamine 1-phosphate (lipid X) and UMP by catalyzing the attack of water at the alpha-P atom. Involved in the biosynthesis of lipid A, a phosphorylated glycolipid that anchors the lipopolysaccharide to the outer membrane of the cell. The sequence is that of UDP-2,3-diacylglucosamine hydrolase from Coxiella burnetii (strain Dugway 5J108-111).